Here is a 138-residue protein sequence, read N- to C-terminus: Acidic phospholipase A2 6 (138 aa).

Positions 1–16 (MRTLWIMAVLLVGVEG) are cleaved as a signal peptide. Intrachain disulfides connect cysteine 42–cysteine 131, cysteine 44–cysteine 60, cysteine 59–cysteine 111, cysteine 65–cysteine 138, cysteine 66–cysteine 104, cysteine 73–cysteine 97, and cysteine 91–cysteine 102. The Ca(2+) site is built by tyrosine 43, glycine 45, and glycine 47. Residue histidine 63 is part of the active site. Aspartate 64 contributes to the Ca(2+) binding site. The active site involves aspartate 105.

Belongs to the phospholipase A2 family. Group II subfamily. D49 sub-subfamily. Homodimer. Ca(2+) is required as a cofactor. As to expression, expressed by the venom gland.

Its subcellular location is the secreted. It catalyses the reaction a 1,2-diacyl-sn-glycero-3-phosphocholine + H2O = a 1-acyl-sn-glycero-3-phosphocholine + a fatty acid + H(+). Its function is as follows. Snake venom phospholipase A2 (PLA2) that has high lipolytic activity. PLA2 catalyzes the calcium-dependent hydrolysis of the 2-acyl groups in 3-sn-phosphoglycerides. This Craspedocephalus gramineus (Bamboo pit viper) protein is Acidic phospholipase A2 6.